The following is a 274-amino-acid chain: Large ribosomal subunit protein uL2cz/uL2cy (274 aa).

Disordered stretches follow at residues 1-23 (MAIH…SQVK) and 224-274 (NPVD…RRSK).

The protein belongs to the universal ribosomal protein uL2 family. As to quaternary structure, part of the 50S ribosomal subunit.

The protein localises to the plastid. Its subcellular location is the chloroplast. In Vitis vinifera (Grape), this protein is Large ribosomal subunit protein uL2cz/uL2cy (rpl2-A).